Consider the following 282-residue polypeptide: Acetyl-coenzyme A carboxylase carboxyl transferase subunit beta (282 aa).

Positions 28–282 (IMTKCPSCRT…TKILDIHHVS (255 aa)) constitute a CoA carboxyltransferase N-terminal domain. 4 residues coordinate Zn(2+): Cys-32, Cys-35, Cys-51, and Cys-54. The C4-type zinc finger occupies 32-54 (CPSCRTIMYTKELKKNLYVCDSC).

The protein belongs to the AccD/PCCB family. As to quaternary structure, acetyl-CoA carboxylase is a heterohexamer composed of biotin carboxyl carrier protein (AccB), biotin carboxylase (AccC) and two subunits each of ACCase subunit alpha (AccA) and ACCase subunit beta (AccD). The cofactor is Zn(2+).

The protein resides in the cytoplasm. The catalysed reaction is N(6)-carboxybiotinyl-L-lysyl-[protein] + acetyl-CoA = N(6)-biotinyl-L-lysyl-[protein] + malonyl-CoA. The protein operates within lipid metabolism; malonyl-CoA biosynthesis; malonyl-CoA from acetyl-CoA: step 1/1. Component of the acetyl coenzyme A carboxylase (ACC) complex. Biotin carboxylase (BC) catalyzes the carboxylation of biotin on its carrier protein (BCCP) and then the CO(2) group is transferred by the transcarboxylase to acetyl-CoA to form malonyl-CoA. This chain is Acetyl-coenzyme A carboxylase carboxyl transferase subunit beta, found in Halalkalibacterium halodurans (strain ATCC BAA-125 / DSM 18197 / FERM 7344 / JCM 9153 / C-125) (Bacillus halodurans).